We begin with the raw amino-acid sequence, 116 residues long: Large ribosomal subunit protein bL17 (116 aa).

This sequence belongs to the bacterial ribosomal protein bL17 family. Part of the 50S ribosomal subunit. Contacts protein L32.

This is Large ribosomal subunit protein bL17 from Crocosphaera subtropica (strain ATCC 51142 / BH68) (Cyanothece sp. (strain ATCC 51142)).